A 423-amino-acid chain; its full sequence is Exodeoxyribonuclease 7 large subunit (423 aa).

The protein belongs to the XseA family. Heterooligomer composed of large and small subunits.

It localises to the cytoplasm. The enzyme catalyses Exonucleolytic cleavage in either 5'- to 3'- or 3'- to 5'-direction to yield nucleoside 5'-phosphates.. Its function is as follows. Bidirectionally degrades single-stranded DNA into large acid-insoluble oligonucleotides, which are then degraded further into small acid-soluble oligonucleotides. In Natranaerobius thermophilus (strain ATCC BAA-1301 / DSM 18059 / JW/NM-WN-LF), this protein is Exodeoxyribonuclease 7 large subunit.